Consider the following 220-residue polypeptide: Thymidylate kinase (220 aa).

10–17 (GIDGCGKS) contributes to the ATP binding site.

It belongs to the thymidylate kinase family.

The catalysed reaction is dTMP + ATP = dTDP + ADP. Phosphorylation of dTMP to form dTDP in both de novo and salvage pathways of dTTP synthesis. The polypeptide is Thymidylate kinase (Prochlorococcus marinus (strain SARG / CCMP1375 / SS120)).